The primary structure comprises 300 residues: tRNA uridine(34) hydroxylase (300 aa).

Positions 128-222 constitute a Rhodanese domain; it reads ADPEVIVVDT…YLEDVPQAQS (95 aa). The active-site Cysteine persulfide intermediate is the Cys-182.

It belongs to the TrhO family.

The catalysed reaction is uridine(34) in tRNA + AH2 + O2 = 5-hydroxyuridine(34) in tRNA + A + H2O. Its function is as follows. Catalyzes oxygen-dependent 5-hydroxyuridine (ho5U) modification at position 34 in tRNAs. This is tRNA uridine(34) hydroxylase from Deinococcus radiodurans (strain ATCC 13939 / DSM 20539 / JCM 16871 / CCUG 27074 / LMG 4051 / NBRC 15346 / NCIMB 9279 / VKM B-1422 / R1).